A 244-amino-acid polypeptide reads, in one-letter code: tRNA pseudouridine synthase A (244 aa).

D52 (nucleophile) is an active-site residue. Residue Y110 participates in substrate binding.

This sequence belongs to the tRNA pseudouridine synthase TruA family. Homodimer.

It carries out the reaction uridine(38/39/40) in tRNA = pseudouridine(38/39/40) in tRNA. In terms of biological role, formation of pseudouridine at positions 38, 39 and 40 in the anticodon stem and loop of transfer RNAs. The chain is tRNA pseudouridine synthase A from Thermoanaerobacter pseudethanolicus (strain ATCC 33223 / 39E) (Clostridium thermohydrosulfuricum).